Here is a 303-residue protein sequence, read N- to C-terminus: MGRLRFVVLLSIFPIKTFSEPCYTMALVLRDSIKISEFINLSAFEKLLPSALTAVKSVRIPKVDKIISYENDTLSDIDLLKGVKLVENGYVCLAGLVVTGEWNLPDNCKGGVSICLVDKRMKRANEATLGSYHTSACKKRFTFKIIPNYSVTTADALKGIWQVMTNIRGVEMEKGFCPLSLEFVSICVVYLNNIKLGLREKILNVTEGGPTELTEAVVDRFVEKVPMAARLKSFRSVNKKKPSNSSKFVNGKSRLNSRNKLNYENGDSDVGTSVVDDIVVGNGVSDIRIDDDCESFDAQSESY.

Belongs to the tobamovirus movement protein family.

The protein resides in the host cytoplasm. It localises to the host cytoskeleton. Its subcellular location is the host cell junction. It is found in the host plasmodesma. In terms of biological role, transports viral genome to neighboring plant cells directly through plasmosdesmata, without any budding. The movement protein allows efficient cell to cell propagation, by bypassing the host cell wall barrier. Forms a ribonucleoprotein complex with viral RNA. Binds microtubules and modulates microtubule stability. Can bind double-stranded DNA. This Odontoglossum ringspot virus (isolate Korean Cy) (ORSV-Cy) protein is Movement protein (MP).